The sequence spans 239 residues: uncharacterized protein (239 aa).

The dksA C4-type; degenerate zinc-finger motif lies at 94–114; the sequence is CEVSGKEIPFERLEALPTATT. Positions 133–158 are enriched in acidic residues; that stretch reads ETPFGQFEFDDDEEIRAPYDSEDSYQ. The segment at 133–182 is disordered; sequence ETPFGQFEFDDDEEIRAPYDSEDSYQDVEKYGNSQTPQDMENPPLSYDDM.

This is an uncharacterized protein from Bacillus subtilis (strain 168).